The chain runs to 592 residues: MRTHYCGHLNKSLAGQTVELCGWVNRRRDLGGLIFIDMRDREGIVQVVVDPDMADAYAVASQLRNEFCIKLTGEVRTRPESQVNKEMATGEVEILAKGLEIINRSDVLPLDFNQKNSEEQRLKYRYLDLRRPEMSDRIKLRAKASSFVRRFLDDNGFLDIETPVLTKATPEGARDYLVPSRVHKGSFYALPQSPQLFKQLLMMSGFDRYYQIVKCFRDEDLRADRQPEFTQIDIETSFMTSDQVRAVTEKMVREMWLELLNVDLGEFPVMPFSEAIRRFGSDKPDLRNPLELVDVADLVKDVDFKVFSGPANDEKGRVAVIRVPGGAELTRKQIDEYTGFVNIYGAKGLAWMKVNDRAAGMEGIQSPVAKFLSEDVINGILERTQAESGDIILFGADKANIVAEALGALRLKLGKDLGLTKEGTWAPLWVVDFPMFEEDDEGNLHAMHHPFTSPLGLTAEELKANPAPAVSNAYDMVLNGYEVGGGSVRIHNAEMQAAVFDILGIDADEQKLKFGFLLDALKFGTPPHAGLAFGLDRLVMLLCGTENIRDVIAFPKTTAAACLMTDAPSVANPAALEELAIAVTVAKEKSAE.

Glu171 serves as a coordination point for L-aspartate. The aspartate stretch occupies residues 195-198 (QLFK). Arg217 contacts L-aspartate. ATP is bound by residues 217 to 219 (RDE) and Gln226. Position 448 (His448) interacts with L-aspartate. Residue Glu482 coordinates ATP. Residue Arg489 participates in L-aspartate binding. 534–537 (GLDR) serves as a coordination point for ATP.

The protein belongs to the class-II aminoacyl-tRNA synthetase family. Type 1 subfamily. As to quaternary structure, homodimer.

It localises to the cytoplasm. The catalysed reaction is tRNA(Asp) + L-aspartate + ATP = L-aspartyl-tRNA(Asp) + AMP + diphosphate. Functionally, catalyzes the attachment of L-aspartate to tRNA(Asp) in a two-step reaction: L-aspartate is first activated by ATP to form Asp-AMP and then transferred to the acceptor end of tRNA(Asp). The chain is Aspartate--tRNA ligase from Vibrio vulnificus (strain YJ016).